The following is a 66-amino-acid chain: Large ribosomal subunit protein bL33c (66 aa).

Belongs to the bacterial ribosomal protein bL33 family.

The protein resides in the plastid. The protein localises to the chloroplast. The sequence is that of Large ribosomal subunit protein bL33c from Populus alba (White poplar).